A 126-amino-acid polypeptide reads, in one-letter code: Small ribosomal subunit protein uS13 (126 aa).

Residues 95–126 form a disordered region; it reads GMPVRGQRTRTNARTRRGRRGQAIGIKKKVKK.

The protein belongs to the universal ribosomal protein uS13 family. Part of the 30S ribosomal subunit. Forms a loose heterodimer with protein S19. Forms two bridges to the 50S subunit in the 70S ribosome.

Located at the top of the head of the 30S subunit, it contacts several helices of the 16S rRNA. In the 70S ribosome it contacts the 23S rRNA (bridge B1a) and protein L5 of the 50S subunit (bridge B1b), connecting the 2 subunits; these bridges are implicated in subunit movement. Contacts the tRNAs in the A and P-sites. This Chloroflexus aggregans (strain MD-66 / DSM 9485) protein is Small ribosomal subunit protein uS13.